The sequence spans 595 residues: MFS-type efflux pump MFS2 (595 aa).

A glycan (N-linked (GlcNAc...) asparagine) is linked at N62. Helical transmembrane passes span 69–89, 106–126, 136–156, 166–186, 197–217, 225–245, 301–321, 336–356, 381–401, 409–429, 442–462, and 478–498; these read WSITFVVAIATLAVALISSAY, VITLGVSLFVLGFAIGPLIWA, LLFFGTYLALTAFNAGAAGSP, FFAGSFGSSPLTNAGGVIADM, GIFAIAPFLGPVLGPVIGGFL, WVEGFLAIFSGVVWIIGSIFL, PIVLLLSTYMAIVYGTLYMLF, PGIGGLAFLGVLGGILAAMVI, LPVAIIGGIAIPIGLFWFAWT, IVSIIASAPFGFGMVLVFLSL, ASVLAANSVLRSLFGAAFPLF, and IPAFLALACVPFPFLFYIYGA.

This sequence belongs to the major facilitator superfamily. DHA1 family. Polyamines/proton antiporter (TC 2.A.1.2.16) subfamily.

The protein localises to the cell membrane. MFS-type efflux pump involved in the modulation susceptibility to fluconazole and voriconazole, 2 azoles with similar molecular structure. The polypeptide is MFS-type efflux pump MFS2 (Trichophyton rubrum (strain ATCC MYA-4607 / CBS 118892) (Athlete's foot fungus)).